We begin with the raw amino-acid sequence, 159 residues long: uncharacterized protein (159 aa).

The interval 1-139 (MSRRAPGSRL…RKSQERSMSY (139 aa)) is disordered. A compositionally biased stretch (polar residues) spans 9 to 31 (RLSSGGTNYSRSWNDWQPRTDSA). Positions 65–82 (QRHDDTRVHADIQNDEKG) are enriched in basic and acidic residues. Positions 105 to 119 (RVNNVTSPEFTSVQH) are enriched in polar residues. Over residues 125–134 (ATKDMRKSQE) the composition is skewed to basic and acidic residues.

This is an uncharacterized protein from Homo sapiens (Human).